Here is an 80-residue protein sequence, read N- to C-terminus: Large ribosomal subunit protein bL31B (80 aa).

Belongs to the bacterial ribosomal protein bL31 family. Type B subfamily. Part of the 50S ribosomal subunit.

The protein is Large ribosomal subunit protein bL31B of Xanthomonas axonopodis pv. citri (strain 306).